Reading from the N-terminus, the 344-residue chain is Glyceraldehyde-3-phosphate dehydrogenase (344 aa).

NAD(+)-binding positions include 11–12 and Gly-110; that span reads TI. 139-141 is a D-glyceraldehyde 3-phosphate binding site; sequence SCN. The active-site Nucleophile is the Cys-140. NAD(+) is bound at residue Arg-169. Position 195-196 (195-196) interacts with D-glyceraldehyde 3-phosphate; sequence HG. Gln-302 lines the NAD(+) pocket.

This sequence belongs to the glyceraldehyde-3-phosphate dehydrogenase family. Homotetramer.

The protein resides in the cytoplasm. It catalyses the reaction D-glyceraldehyde 3-phosphate + phosphate + NADP(+) = (2R)-3-phospho-glyceroyl phosphate + NADPH + H(+). It carries out the reaction D-glyceraldehyde 3-phosphate + phosphate + NAD(+) = (2R)-3-phospho-glyceroyl phosphate + NADH + H(+). The protein operates within carbohydrate degradation; glycolysis; pyruvate from D-glyceraldehyde 3-phosphate: step 1/5. The chain is Glyceraldehyde-3-phosphate dehydrogenase from Pyrobaculum islandicum (strain DSM 4184 / JCM 9189 / GEO3).